Consider the following 152-residue polypeptide: Transcriptional regulator MraZ (152 aa).

SpoVT-AbrB domains are found at residues 5-52 and 81-124; these read ATLV…PLPE and ASEC…DETT.

Belongs to the MraZ family. As to quaternary structure, forms oligomers.

Its subcellular location is the cytoplasm. The protein localises to the nucleoid. Negatively regulates its own expression and that of the subsequent genes in the proximal part of the division and cell wall (dcw) gene cluster. Acts by binding directly to DNA. May also regulate the expression of genes outside the dcw cluster. The chain is Transcriptional regulator MraZ from Escherichia coli O45:K1 (strain S88 / ExPEC).